We begin with the raw amino-acid sequence, 61 residues long: MAKKALIEKSNRKPKYAVRGYTRCQRCGRSRSVYRVFGLCRVCLRQMAHRGELPGITKSSW.

Positions 24, 27, 40, and 43 each coordinate Zn(2+).

Belongs to the universal ribosomal protein uS14 family. Zinc-binding uS14 subfamily. Part of the 30S ribosomal subunit. Contacts proteins S3 and S10. Zn(2+) serves as cofactor.

Functionally, binds 16S rRNA, required for the assembly of 30S particles and may also be responsible for determining the conformation of the 16S rRNA at the A site. This is Small ribosomal subunit protein uS14 from Frankia alni (strain DSM 45986 / CECT 9034 / ACN14a).